A 224-amino-acid chain; its full sequence is Adenylate kinase (224 aa).

10–15 (GSGKST) is a binding site for ATP. An NMP region spans residues 30–59 (ASGDIIRAEINKGNALGREMKKYIEKGDLL). AMP is bound by residues serine 31, arginine 36, 57 to 59 (DLL), 83 to 86 (GYPR), and glutamine 90. Residues 124-161 (GRRICRQCGAVYHIKYNPSKVPGKCDICGGEVIQREDD) form an LID region. Arginine 125 contacts ATP. 2 residues coordinate Zn(2+): cysteine 128 and cysteine 131. 134–135 (VY) serves as a coordination point for ATP. The Zn(2+) site is built by cysteine 148 and cysteine 151. AMP is bound by residues arginine 158 and arginine 169. Glycine 197 provides a ligand contact to ATP.

It belongs to the adenylate kinase family. As to quaternary structure, monomer.

The protein localises to the cytoplasm. It carries out the reaction AMP + ATP = 2 ADP. The protein operates within purine metabolism; AMP biosynthesis via salvage pathway; AMP from ADP: step 1/1. In terms of biological role, catalyzes the reversible transfer of the terminal phosphate group between ATP and AMP. Plays an important role in cellular energy homeostasis and in adenine nucleotide metabolism. In Thermococcus sibiricus (strain DSM 12597 / MM 739), this protein is Adenylate kinase.